Here is a 127-residue protein sequence, read N- to C-terminus: Small ribosomal subunit protein uS11 (127 aa).

Belongs to the universal ribosomal protein uS11 family. In terms of assembly, part of the 30S ribosomal subunit. Interacts with proteins S7 and S18. Binds to IF-3.

In terms of biological role, located on the platform of the 30S subunit, it bridges several disparate RNA helices of the 16S rRNA. Forms part of the Shine-Dalgarno cleft in the 70S ribosome. The polypeptide is Small ribosomal subunit protein uS11 (Prosthecochloris aestuarii (strain DSM 271 / SK 413)).